The following is a 372-amino-acid chain: Pristinol synthase (372 aa).

A compositionally biased stretch (basic and acidic residues) spans 1–12 (MAHETTSGRRLP). The disordered stretch occupies residues 1–23 (MAHETTSGRRLPDPTSPSDPTRR). Residues Asp100 and Asp104 each contribute to the Mg(2+) site. Residues 100–104 (DDQFD) carry the DDXXD motif motif. Arg197 contributes to the substrate binding site. Residues Asn243 and Ser247 each contribute to the Mg(2+) site. Residue Lys250 participates in substrate binding. Glu251 lines the Mg(2+) pocket. 337–338 (RY) is a substrate binding site. The segment at 349-372 (GRRRPWDGLTTATGTASPRHPRRA) is disordered.

Belongs to the terpene synthase family. Requires Mg(2+) as cofactor.

The catalysed reaction is (2E,6E)-farnesyl diphosphate + H2O = (+)-(2S,3R,9R)-pristinol + diphosphate. It functions in the pathway secondary metabolite biosynthesis; terpenoid biosynthesis. Its function is as follows. Catalyzes the conversion of (2E,6E)-farnesyl diphosphate (FPP) to yield a new 5-8 bicyclic (pristinane) sesquiterpenol (+)-(2S,3R,9R)-pristinol via a 1,11-cyclization, which requires the abstraction of the pyrophosphate from FPP to yield the humulyl cation. The only accepted substrate is farnesyl diphosphate (FPP). The polypeptide is Pristinol synthase (Streptomyces pristinaespiralis (strain ATCC 25486 / DSM 40338 / CBS 914.69 / JCM 4507 / KCC S-0507 / NBRC 13074 / NRRL 2958 / 5647)).